The primary structure comprises 474 residues: Cyclin-dependent kinase 18 (474 aa).

Ser14, Ser74, Ser89, Ser98, Ser117, and Ser132 each carry phosphoserine. Residues 44 to 93 (NLQLGPLGRDPPQECSTFSPTDSGEEPGQLSPGVQFQRRQNQRRFSMEDV) are disordered. Residues 144–425 (YVKLDKLGEG…AEAALSHSYF (282 aa)) enclose the Protein kinase domain. Residues 150 to 158 (LGEGTYATV) and Lys173 each bind ATP. Asp265 acts as the Proton acceptor in catalysis. A phosphoserine mark is found at Ser440 and Ser443.

Belongs to the protein kinase superfamily. CMGC Ser/Thr protein kinase family. CDC2/CDKX subfamily. Isoform 2 expression is limited to several subcortical nuclei of the basal gangli and the spinal cord. Isoform 1 is widely expressed.

It catalyses the reaction L-seryl-[protein] + ATP = O-phospho-L-seryl-[protein] + ADP + H(+). It carries out the reaction L-threonyl-[protein] + ATP = O-phospho-L-threonyl-[protein] + ADP + H(+). May play a role in signal transduction cascades in terminally differentiated cells. In Homo sapiens (Human), this protein is Cyclin-dependent kinase 18 (CDK18).